Consider the following 154-residue polypeptide: Large ribosomal subunit protein uL13 (154 aa).

The protein belongs to the universal ribosomal protein uL13 family. As to quaternary structure, part of the 50S ribosomal subunit.

In terms of biological role, this protein is one of the early assembly proteins of the 50S ribosomal subunit, although it is not seen to bind rRNA by itself. It is important during the early stages of 50S assembly. This Rhizobium rhizogenes (strain K84 / ATCC BAA-868) (Agrobacterium radiobacter) protein is Large ribosomal subunit protein uL13.